The sequence spans 465 residues: Glycine--tRNA ligase (465 aa).

Substrate-binding residues include Arg98 and Glu174. ATP contacts are provided by residues 206–208, 216–221, 290–291, and 334–337; these read RNE, FRTREF, EL, and GADR. 221 to 225 contributes to the substrate binding site; it reads FEQME. 330–334 is a binding site for substrate; it reads EPSLG.

It belongs to the class-II aminoacyl-tRNA synthetase family. As to quaternary structure, homodimer.

It is found in the cytoplasm. It carries out the reaction tRNA(Gly) + glycine + ATP = glycyl-tRNA(Gly) + AMP + diphosphate. In terms of biological role, catalyzes the attachment of glycine to tRNA(Gly). The polypeptide is Glycine--tRNA ligase (Agathobacter rectalis (strain ATCC 33656 / DSM 3377 / JCM 17463 / KCTC 5835 / VPI 0990) (Eubacterium rectale)).